Here is a 336-residue protein sequence, read N- to C-terminus: N-acetylornithine carbamoyltransferase (336 aa).

Residues 49 to 52 (SMRT), tryptophan 77, and arginine 112 each bind carbamoyl phosphate. N(2)-acetyl-L-ornithine is bound at residue glutamate 144. 148–151 (HPCQ) is a binding site for carbamoyl phosphate. 2 residues coordinate N(2)-acetyl-L-ornithine: lysine 252 and leucine 295. A carbamoyl phosphate-binding site is contributed by 294-295 (CL). Lysine 302 bears the N6-carboxylysine mark. Residue arginine 322 coordinates carbamoyl phosphate.

Belongs to the aspartate/ornithine carbamoyltransferase superfamily. AOTCase family. Homotrimer.

The protein localises to the cytoplasm. It carries out the reaction N(2)-acetyl-L-ornithine + carbamoyl phosphate = N(2)-acetyl-L-citrulline + phosphate + H(+). It participates in amino-acid biosynthesis; L-arginine biosynthesis. Carboxylation at Lys-302 increases the catalytic activity of the enzyme. In terms of biological role, catalyzes the transfer of the carbamoyl group from carbamoyl phosphate to the delta-amino group of N(2)-acetyl-L-ornithine to produce N(2)-acetyl-L-citrulline. This is a step in an alternative arginine biosynthesis pathway. The enzyme has no activity with ornithine. This Xylella fastidiosa (strain Temecula1 / ATCC 700964) protein is N-acetylornithine carbamoyltransferase.